Reading from the N-terminus, the 280-residue chain is Ribosomal RNA small subunit methyltransferase A (280 aa).

S-adenosyl-L-methionine is bound by residues asparagine 28, leucine 30, glycine 55, glutamate 77, aspartate 103, and asparagine 122.

The protein belongs to the class I-like SAM-binding methyltransferase superfamily. rRNA adenine N(6)-methyltransferase family. RsmA subfamily.

The protein resides in the cytoplasm. The catalysed reaction is adenosine(1518)/adenosine(1519) in 16S rRNA + 4 S-adenosyl-L-methionine = N(6)-dimethyladenosine(1518)/N(6)-dimethyladenosine(1519) in 16S rRNA + 4 S-adenosyl-L-homocysteine + 4 H(+). Its function is as follows. Specifically dimethylates two adjacent adenosines (A1518 and A1519) in the loop of a conserved hairpin near the 3'-end of 16S rRNA in the 30S particle. May play a critical role in biogenesis of 30S subunits. In Roseobacter denitrificans (strain ATCC 33942 / OCh 114) (Erythrobacter sp. (strain OCh 114)), this protein is Ribosomal RNA small subunit methyltransferase A.